The primary structure comprises 76 residues: Putative cation transport regulator ChaB (76 aa).

It belongs to the ChaB family. As to quaternary structure, monomer.

In terms of biological role, might be a regulator of the sodium-potassium/proton antiporter ChaA. This chain is Putative cation transport regulator ChaB, found in Escherichia coli O157:H7.